The chain runs to 196 residues: Imidazoleglycerol-phosphate dehydratase (196 aa).

This sequence belongs to the imidazoleglycerol-phosphate dehydratase family.

It localises to the cytoplasm. The enzyme catalyses D-erythro-1-(imidazol-4-yl)glycerol 3-phosphate = 3-(imidazol-4-yl)-2-oxopropyl phosphate + H2O. Its pathway is amino-acid biosynthesis; L-histidine biosynthesis; L-histidine from 5-phospho-alpha-D-ribose 1-diphosphate: step 6/9. This chain is Imidazoleglycerol-phosphate dehydratase, found in Solidesulfovibrio magneticus (strain ATCC 700980 / DSM 13731 / RS-1) (Desulfovibrio magneticus).